The sequence spans 236 residues: Hydantoin racemase (236 aa).

As to quaternary structure, homohexamer, homoheptamer or homooctamer.

It carries out the reaction a D-5-monosubstituted hydantoin = a L-5-monosubstituted hydantoin. The enzyme catalyses D-5-benzylhydantoin = L-5-benzylhydantoin. Its activity is regulated as follows. Completely inhibited by HgCl(2) and iodoacetamide. Stimulated by dithiothreitol. In terms of biological role, involved in the asymmetric conversion of racemic 5-substituted hydantoins to the corresponding L-amino acids. Catalyzes the racemization via enolization of D- and L-5-monosubstituted hydantoins. It shows preference for hydantoins with arylalkyl side chains such as 5-benzylhydantoin (BH) and, to a lesser extent, 5-(3-indolylmethylene)hydantoin (IMH). This is Hydantoin racemase from Paenarthrobacter aurescens (Arthrobacter aurescens).